The sequence spans 505 residues: AMP phosphorylase (505 aa).

AMP is bound by residues G170, S196 to S201, and T205. The Proton donor role is filled by D258. 2 residues coordinate AMP: S266 and K290.

It belongs to the thymidine/pyrimidine-nucleoside phosphorylase family. Type 2 subfamily.

The catalysed reaction is AMP + phosphate = alpha-D-ribose 1,5-bisphosphate + adenine. The enzyme catalyses CMP + phosphate = cytosine + alpha-D-ribose 1,5-bisphosphate. It catalyses the reaction UMP + phosphate = alpha-D-ribose 1,5-bisphosphate + uracil. In terms of biological role, catalyzes the conversion of AMP and phosphate to adenine and ribose 1,5-bisphosphate (R15P). Exhibits phosphorylase activity toward CMP and UMP in addition to AMP. Functions in an archaeal AMP degradation pathway, together with R15P isomerase and RubisCO. This chain is AMP phosphorylase, found in Methanococcus maripaludis (strain DSM 14266 / JCM 13030 / NBRC 101832 / S2 / LL).